Here is a 206-residue protein sequence, read N- to C-terminus: Large ribosomal subunit protein uL4 (206 aa).

The disordered stretch occupies residues 47–94 (NRAQKGRAEVSKSTRKPWRQKGTGRARAGMASSPLWRGGGRVFPNSPE). Positions 59-70 (STRKPWRQKGTG) are enriched in basic residues.

Belongs to the universal ribosomal protein uL4 family. In terms of assembly, part of the 50S ribosomal subunit.

In terms of biological role, one of the primary rRNA binding proteins, this protein initially binds near the 5'-end of the 23S rRNA. It is important during the early stages of 50S assembly. It makes multiple contacts with different domains of the 23S rRNA in the assembled 50S subunit and ribosome. Forms part of the polypeptide exit tunnel. This chain is Large ribosomal subunit protein uL4, found in Aromatoleum aromaticum (strain DSM 19018 / LMG 30748 / EbN1) (Azoarcus sp. (strain EbN1)).